The primary structure comprises 837 residues: Protein translocase subunit SecA 1 (837 aa).

Residues Gln85, 103–107 (GEGKT), and Asp493 each bind ATP. Zn(2+) is bound by residues Cys821, Cys823, Cys832, and His833.

Belongs to the SecA family. Monomer and homodimer. Part of the essential Sec protein translocation apparatus which comprises SecA, SecYEG and auxiliary proteins SecDF. Other proteins may also be involved. It depends on Zn(2+) as a cofactor.

The protein resides in the cell membrane. It localises to the cytoplasm. The catalysed reaction is ATP + H2O + cellular proteinSide 1 = ADP + phosphate + cellular proteinSide 2.. Functionally, part of the Sec protein translocase complex. Interacts with the SecYEG preprotein conducting channel. Has a central role in coupling the hydrolysis of ATP to the transfer of proteins into and across the cell membrane, serving as an ATP-driven molecular motor driving the stepwise translocation of polypeptide chains across the membrane. The chain is Protein translocase subunit SecA 1 from Streptococcus pneumoniae serotype 4 (strain ATCC BAA-334 / TIGR4).